Consider the following 372-residue polypeptide: NAD(P)H-quinone oxidoreductase subunit 1 (372 aa).

9 consecutive transmembrane segments (helical) span residues 27–47 (TIWL…GVLV), 65–85 (PEYI…KLVF), 97–117 (WLFT…YLIV), 128–148 (LGIG…GLLM), 176–196 (LALA…IDIV), 204–224 (ILGW…IAAL), 249–269 (YAGM…VLSS), 308–328 (GLGL…AILL), and 351–371 (VGLV…FAFG).

Belongs to the complex I subunit 1 family. NDH-1 is composed of at least 11 different subunits.

It is found in the cellular thylakoid membrane. The catalysed reaction is a plastoquinone + NADH + (n+1) H(+)(in) = a plastoquinol + NAD(+) + n H(+)(out). The enzyme catalyses a plastoquinone + NADPH + (n+1) H(+)(in) = a plastoquinol + NADP(+) + n H(+)(out). NDH-1 shuttles electrons from an unknown electron donor, via FMN and iron-sulfur (Fe-S) centers, to quinones in the respiratory and/or the photosynthetic chain. The immediate electron acceptor for the enzyme in this species is believed to be plastoquinone. Couples the redox reaction to proton translocation, and thus conserves the redox energy in a proton gradient. The polypeptide is NAD(P)H-quinone oxidoreductase subunit 1 (Acaryochloris marina (strain MBIC 11017)).